A 400-amino-acid polypeptide reads, in one-letter code: Apolipoprotein N-acyltransferase (400 aa).

5 helical membrane passes run 16–36, 42–62, 67–87, 97–117, and 123–143; these read AISP…VLFV, FGVG…GLRY, FLIP…FYIG, FAFL…IVPE, and SYIG…WILF. One can recognise a CN hydrolase domain in the interval 181–400; it reads AQSAVSQDFD…AIITPFVSSR (220 aa). E222 serves as the catalytic Proton acceptor. K283 is a catalytic residue. Residue C332 is the Nucleophile of the active site. Residues 377-397 traverse the membrane as a helical segment; that stretch reads YGSVIFHATNLSPAAIITPFV.

It belongs to the CN hydrolase family. Apolipoprotein N-acyltransferase subfamily.

Its subcellular location is the cell inner membrane. It carries out the reaction N-terminal S-1,2-diacyl-sn-glyceryl-L-cysteinyl-[lipoprotein] + a glycerophospholipid = N-acyl-S-1,2-diacyl-sn-glyceryl-L-cysteinyl-[lipoprotein] + a 2-acyl-sn-glycero-3-phospholipid + H(+). Its pathway is protein modification; lipoprotein biosynthesis (N-acyl transfer). In terms of biological role, catalyzes the phospholipid dependent N-acylation of the N-terminal cysteine of apolipoprotein, the last step in lipoprotein maturation. The protein is Apolipoprotein N-acyltransferase of Helicobacter hepaticus (strain ATCC 51449 / 3B1).